The following is a 1475-amino-acid chain: Protein Shroom4 (1475 aa).

Positions 10 to 92 (YVPVQLQGGA…ILKLIVRRRN (83 aa)) constitute a PDZ domain. Disordered stretches follow at residues 151–175 (EKSSSIGSMESLEQPGQPTYEGHLL) and 202–321 (CALS…PPRS). Residues 249-258 (TSTSHASSYS) show a composition bias toward polar residues. Over residues 294-312 (EQHRASEPVDSLPQKEKPG) the composition is skewed to basic and acidic residues. Ser412 carries the post-translational modification Phosphoserine. Disordered stretches follow at residues 432–523 (SKGM…PSAT), 542–577 (HTEASEEGDNEPKECGRLGGRRSGGPRGRSIQNRRR), 610–644 (NEAVEETQEPPESPPLSASNASLLPSYKNVPSPGD), and 658–688 (SECLSQASESSKARGGVEGRMSPGQRSGQSS). Basic and acidic residues predominate over residues 471-485 (QTRKERKTTPLDDKL). A compositionally biased stretch (polar residues) spans 513-523 (SDLTSQQPSAT). Basic and acidic residues predominate over residues 542–557 (HTEASEEGDNEPKECG). Gly residues predominate over residues 558–568 (RLGGRRSGGPR). Composition is skewed to low complexity over residues 624-635 (PLSASNASLLPS) and 658-667 (SECLSQASES). A Phosphoserine modification is found at Ser722. Polar residues-rich tracts occupy residues 727–738 (AQPQVALSTEAP) and 775–791 (KSLSTSHLPGLTTHNNK). 2 disordered regions span residues 727–753 (AQPQVALSTEAPSNPDDSKELKTSTPQ) and 772–791 (ESSKSLSTSHLPGLTTHNNK). Ser1010 carries the post-translational modification Phosphoserine. Disordered stretches follow at residues 1022 to 1041 (SNKPEESSVYEDENSVASMP) and 1055 to 1185 (SLEP…QSLQ). Pro residues predominate over residues 1090 to 1099 (FPPPRPPPPN). The segment covering 1110–1125 (QLQQQQQQQQQQQQQQ) has biased composition (low complexity). Residues 1128-1145 (EEEEEKEQEEEGEKEEDL) show a composition bias toward acidic residues. A compositionally biased stretch (polar residues) spans 1149 to 1168 (YFSSELTGSCAPNTEEQPQS). The ASD2 domain maps to 1190–1469 (FALHPSNFVP…QLKCLKESLH (280 aa)). The stretch at 1380–1470 (SESNQEKLVL…LKCLKESLHL (91 aa)) forms a coiled coil.

The protein belongs to the shroom family. Interacts directly with F-actin. As to expression, detected in most adult tissues examined. Expressed in brain, lung, heart, liver, kidney, muscle and ovary. Expressed throughout the brain, with high expression in the brain stem and cerebellum and weaker expression in the hypothalamus, the hippocampus and the olfactory bulb. Expressed in wide range of cell types during development, including vascular endothelium and the polarized epithelium of the neural tube and kidney.

The protein localises to the cytoplasm. The protein resides in the cytoskeleton. Probable regulator of cytoskeletal architecture that plays an important role in development. May regulate cellular and cytoskeletal architecture by modulating the spatial distribution of myosin II. The sequence is that of Protein Shroom4 (Shroom4) from Mus musculus (Mouse).